We begin with the raw amino-acid sequence, 459 residues long: Glycosyl hydrolase family 109 protein (459 aa).

The tat-type signal signal peptide spans 1-31 (MHNIHRRNFLKAAGAATAGLVTANIALNAYA). Residues 64-65 (ER), aspartate 86, 135-138 (WEWH), 155-156 (EV), and asparagine 184 each bind NAD(+). Substrate is bound by residues tyrosine 213, arginine 232, 244–247 (YPTH), and tyrosine 326. Tyrosine 244 serves as a coordination point for NAD(+).

Belongs to the Gfo/Idh/MocA family. Glycosyl hydrolase 109 subfamily. The cofactor is NAD(+). Post-translationally, predicted to be exported by the Tat system. The position of the signal peptide cleavage has not been experimentally proven.

Functionally, glycosidase. The sequence is that of Glycosyl hydrolase family 109 protein from Shewanella baltica (strain OS155 / ATCC BAA-1091).